The following is an 863-amino-acid chain: DNA replication licensing factor mcm4-B (863 aa).

The disordered stretch occupies residues 1–130 (MSSPTSTPSR…ARKVKQVDLH (130 aa)). 2 stretches are compositionally biased toward polar residues: residues 54 to 64 (SPSGDVQSPSG) and 84 to 99 (LDLSSPLTYGTPSSRV). The segment at 306–331 (CQVCAFTTRVEIDRGRIAEPSVCKHC) adopts a C4-type zinc-finger fold. In terms of domain architecture, MCM spans 458–667 (IYERLAAALA…YDRRLAHHLV (210 aa)). 8 residues coordinate ATP: tyrosine 471, arginine 497, lysine 516, serine 517, asparagine 618, arginine 643, arginine 732, and glutamate 735. The short motif at 642–645 (SRFD) is the Arginine finger element.

This sequence belongs to the MCM family. In terms of assembly, component of the mcm2-7 complex (RLF-M). The complex forms a toroidal hexameric ring with the proposed subunit order mcm2-mcm6-mcm4-mcm7-mcm3-mcm5. The heterodimer of mmcm3/mcm5 interacts with mcm4, mmcm6, mcm7 and weakly with mcm2. Begins to associate with zmcm6 at the neurula stage. Component of the CMG helicase complex, composed of the mcm2-7 complex, the GINS complex and cdc45. Post-translationally, hyperphosphorylated during mitosis in a mechanism requiring cdc2-cyclin B and other kinases. Undergoes dephosphorylation after exiting mitosis, existing in a partially phosphorylated state in the cytosolic interphase mcm complex which associates with the pre-replication complexes (pre-Rcs). Complete dephosphorylation inactivates the mcm complex, preventing its binding to chromatin. Becomes actively phosphorylated during S phase once the mcm complex is assembled on the chromatin. This chromatin-associated phosphorylation occurs during the activation of the pre-Rcs and is independent of cdks. Phosphorylated by the cdc7-dbf4b complex.

It is found in the nucleus. The protein resides in the chromosome. The enzyme catalyses ATP + H2O = ADP + phosphate + H(+). In terms of biological role, acts as a component of the MCM2-7 complex (MCM complex) which is the replicative helicase essential for 'once per cell cycle' DNA replication initiation and elongation in eukaryotic cells. Core component of CDC45-MCM-GINS (CMG) helicase, the molecular machine that unwinds template DNA during replication, and around which the replisome is built. The active ATPase sites in the MCM2-7 ring are formed through the interaction surfaces of two neighboring subunits such that a critical structure of a conserved arginine finger motif is provided in trans relative to the ATP-binding site of the Walker A box of the adjacent subunit. The six ATPase active sites, however, are likely to contribute differentially to the complex helicase activity. The chain is DNA replication licensing factor mcm4-B (mcm4-b) from Xenopus laevis (African clawed frog).